Consider the following 79-residue polypeptide: U-actitoxin-Avd9d (79 aa).

The N-terminal stretch at 1–19 (NLKVLAVFVLCAILVVVTA) is a signal peptide. The propeptide occupies 20-37 (ERRGTETGGYKKDTLEDL). Positions 44–79 (CFDSFKEATCHMAKTNRLCKTSAKYQINCKKTCGLC) constitute a ShKT domain. Intrachain disulfides connect Cys44/Cys79, Cys53/Cys72, and Cys62/Cys76. A crucial for binding to potassium channels region spans residues 67 to 68 (KY).

This sequence belongs to the sea anemone type 1 potassium channel toxin family. Type 1b subfamily.

Its subcellular location is the secreted. It is found in the nematocyst. In terms of biological role, inhibits voltage-gated potassium channels (Kv1/KCNA). In Anemonia viridis (Snakelocks anemone), this protein is U-actitoxin-Avd9d.